Reading from the N-terminus, the 369-residue chain is Phosphate-binding protein PstS 3 (369 aa).

The signal sequence occupies residues 1–21 (MKLNQFGAAIGLLATGALLSG). Residue cysteine 22 is the site of N-palmitoyl cysteine attachment. Cysteine 22 is lipidated: S-diacylglycerol cysteine. Phosphate contacts are provided by residues 55–57 (STA), serine 85, aspartate 103, and 190–192 (SGT).

It belongs to the PstS family. As to quaternary structure, the complex is composed of two ATP-binding proteins (PstB), two transmembrane proteins (PstC and PstA) and a solute-binding protein (PstS).

It is found in the cell membrane. In terms of biological role, part of the ABC transporter complex PstSACB involved in phosphate import. The chain is Phosphate-binding protein PstS 3 (pstS2) from Mycobacterium leprae (strain TN).